Consider the following 365-residue polypeptide: 3-dehydroquinate synthase (365 aa).

NAD(+) is bound by residues D69 to K74, G103 to D107, T127 to T128, K140, and K149. Positions 182, 245, and 262 each coordinate Zn(2+).

The protein belongs to the sugar phosphate cyclases superfamily. Dehydroquinate synthase family. NAD(+) is required as a cofactor. It depends on Co(2+) as a cofactor. The cofactor is Zn(2+).

The protein resides in the cytoplasm. It carries out the reaction 7-phospho-2-dehydro-3-deoxy-D-arabino-heptonate = 3-dehydroquinate + phosphate. The protein operates within metabolic intermediate biosynthesis; chorismate biosynthesis; chorismate from D-erythrose 4-phosphate and phosphoenolpyruvate: step 2/7. In terms of biological role, catalyzes the conversion of 3-deoxy-D-arabino-heptulosonate 7-phosphate (DAHP) to dehydroquinate (DHQ). The sequence is that of 3-dehydroquinate synthase from Pseudomonas putida (strain ATCC 47054 / DSM 6125 / CFBP 8728 / NCIMB 11950 / KT2440).